Here is an 87-residue protein sequence, read N- to C-terminus: MNSKVFAVLLLLALLTCILSEKYCPTPRNTSCKKMNIKNNCCRDSDCTSNAFCCAEPCGNFCHKASDKPGGRRVDPNASCQTGYVYW.

Positions Met-1–Ser-20 are cleaved as a signal peptide. Residues Glu-21–Ser-66 enclose the WAP domain. 5 disulfide bridges follow: Cys-24–Cys-54, Cys-32–Cys-58, Cys-41–Cys-53, Cys-42–Cys-80, and Cys-47–Cys-62.

Belongs to the venom protein 11 family. 01 (wap-1) subfamily. In terms of processing, contains 5 disulfide bonds. Expressed by the venom gland.

It is found in the secreted. Its function is as follows. Has antibacterial activity. The polypeptide is U14-lycotoxin-Ls1c (Lycosa singoriensis (Wolf spider)).